Consider the following 568-residue polypeptide: Phosphoprotein (568 aa).

Disordered stretches follow at residues methionine 1–arginine 22 and proline 40–glutamate 320. Residues isoleucine 7–glycine 20 are compositionally biased toward basic and acidic residues. Positions aspartate 33–threonine 41 are N0 binding. The span at leucine 50–proline 60 shows a compositional bias: polar residues. Position 68 is a phosphoserine; by host (serine 68). A compositionally biased stretch (basic and acidic residues) spans arginine 83–alanine 101. A Phosphoserine; by host modification is found at serine 125. Over residues glycine 150–aspartate 168 the composition is skewed to basic and acidic residues. Positions alanine 191–alanine 206 are enriched in polar residues. Serine 192, serine 249, and serine 257 each carry phosphoserine; by host. The multimerization stretch occupies residues phenylalanine 344–serine 411. Residues tyrosine 364–histidine 429 adopt a coiled-coil conformation. The tract at residues glutamate 412–threonine 445 is l protein binding. Serine 447 and serine 449 each carry phosphoserine; by host. An interaction with the nucleocapsid (N-RNA) region spans residues aspartate 479–asparagine 568.

This sequence belongs to the respirovirus P protein family. As to quaternary structure, homotetramer. Interacts (via multimerization domain) with polymerase L; this interaction forms the polymerase complex. Interacts (via N-terminus) with N0; this interaction allows P to chaperon N0 before encapsidation and form the N-P complex. Interacts (via C-terminus) with N-RNA template; this interaction positions the polymerase on the template. In terms of processing, phosphorylated by PKC/PRKCZ, and other unknown kinases. Phosphorylation is necessary for viral transcription and replication. The N-terminus contains the majority of phosphorylated sites. Ser-249 is the major site of phosphorylation, but is not necessary for most functions.

The protein localises to the host cytoplasm. Its function is as follows. Essential cofactor of the RNA polymerase L that plays a central role in the transcription and replication by forming the polymerase complex with RNA polymerase L and recruiting L to the genomic N-RNA template for RNA synthesis. Also plays a central role in the encapsidation of nascent RNA chains by forming the encapsidation complex with the nucleocapsid protein N (N-P complex). Acts as a chaperone for newly synthesized free N protein, so-called N0, allowing encapsidation of nascent RNA chains during replication. The nucleoprotein protein N prevents excessive phosphorylation of P, which leads to down-regulation of viral transcription/ replication. Participates, together with N, in the formation of viral factories (viroplasms), which are large inclusions in the host cytoplasm where replication takes place. Recruits host PI4KB and remodel the host endoplasmic reticulum membrane to form viral replication factories. The chain is Phosphoprotein (P/V/C) from Sendai virus (strain 6/94) (SeV).